An 86-amino-acid polypeptide reads, in one-letter code: Neurotoxin LmNaTx35.2 (86 aa).

The signal sequence occupies residues 1 to 21; sequence MQLKIQLLMLVLMTVLTGVLG. Positions 22-85 constitute an LCN-type CS-alpha/beta domain; that stretch reads KDGYVVHEDT…VYGDKGTYCW (64 aa). Cystine bridges form between C33/C84, C37/C60, C46/C65, and C50/C67.

It belongs to the long (4 C-C) scorpion toxin superfamily. Sodium channel inhibitor family. Alpha subfamily. In terms of tissue distribution, expressed by the venom gland.

The protein localises to the secreted. Its function is as follows. Binds voltage-independently at site-3 of voltage-gated sodium channels (Nav) and inhibits the inactivation of the activated channels, thereby blocking neuronal transmission. This is Neurotoxin LmNaTx35.2 from Lychas mucronatus (Chinese swimming scorpion).